A 277-amino-acid polypeptide reads, in one-letter code: Isoprenyl transferase 1 (277 aa).

A disordered region spans residues Met1–Gly30. Asp42 is a catalytic residue. Asp42 contributes to the Mg(2+) binding site. Residues Gly43–Arg46, Trp47, Arg55, His59, and Ser87–Glu89 each bind substrate. Asn90 functions as the Proton acceptor in the catalytic mechanism. Substrate contacts are provided by residues Trp91, Arg93, Arg210, and Arg216–Ser218. Glu229 serves as a coordination point for Mg(2+).

The protein belongs to the UPP synthase family. Homodimer. It depends on Mg(2+) as a cofactor.

Its function is as follows. Catalyzes the condensation of isopentenyl diphosphate (IPP) with allylic pyrophosphates generating different type of terpenoids. In Streptomyces coelicolor (strain ATCC BAA-471 / A3(2) / M145), this protein is Isoprenyl transferase 1.